Consider the following 542-residue polypeptide: Chaperonin GroEL 2 (542 aa).

ATP contacts are provided by residues 30–33 (TLGP), Lys51, 87–91 (DGTTT), Gly415, and Asp496. A disordered region spans residues 523 to 542 (AEKPKKDGQPQMPPAPGMDF). Over residues 533–542 (QMPPAPGMDF) the composition is skewed to pro residues.

This sequence belongs to the chaperonin (HSP60) family. In terms of assembly, forms a cylinder of 14 subunits composed of two heptameric rings stacked back-to-back. Interacts with the co-chaperonin GroES.

The protein localises to the cytoplasm. The enzyme catalyses ATP + H2O + a folded polypeptide = ADP + phosphate + an unfolded polypeptide.. Its function is as follows. Together with its co-chaperonin GroES, plays an essential role in assisting protein folding. The GroEL-GroES system forms a nano-cage that allows encapsulation of the non-native substrate proteins and provides a physical environment optimized to promote and accelerate protein folding. This is Chaperonin GroEL 2 from Sinorhizobium medicae (strain WSM419) (Ensifer medicae).